The primary structure comprises 296 residues: Phosphoribosylaminoimidazole-succinocarboxamide synthase (296 aa).

This sequence belongs to the SAICAR synthetase family.

It carries out the reaction 5-amino-1-(5-phospho-D-ribosyl)imidazole-4-carboxylate + L-aspartate + ATP = (2S)-2-[5-amino-1-(5-phospho-beta-D-ribosyl)imidazole-4-carboxamido]succinate + ADP + phosphate + 2 H(+). Its pathway is purine metabolism; IMP biosynthesis via de novo pathway; 5-amino-1-(5-phospho-D-ribosyl)imidazole-4-carboxamide from 5-amino-1-(5-phospho-D-ribosyl)imidazole-4-carboxylate: step 1/2. The protein is Phosphoribosylaminoimidazole-succinocarboxamide synthase of Citrifermentans bemidjiense (strain ATCC BAA-1014 / DSM 16622 / JCM 12645 / Bem) (Geobacter bemidjiensis).